Reading from the N-terminus, the 468-residue chain is MSQGKIVQIIGAVVDVEFPRESVPKVYDALKVENTEITLEVQQQLGDGVVRCIALGSTDGLKRNLVAVNTGRGISVPVGAGTLGRIMDVLGRPIDEAGPVAASDSWEIHRDAPSYEDQSPATELLETGIKVIDLMCPFAKGGKVGLFGGAGVGKTVNMMELINNIAKAHSGLSVFAGVGERTREGNDFYHEMKDSNVLDKVAMVYGQMNEPPGNRLRVALTGLTMAEYFRDEKDENGKGKDVLLFVDNIYRYTLAGTEVSALLGRMPSAVGYQPTLAEEMGVLQERITSTKNGSITSIQAVYVPADDLTDPSPATTFAHLDSTVTLSRSIASLGIYPAVDPLDSTSRQMDPLVIGHEHYDTAQRVQQTLQKYKELKDIIAILGMDELSEEDKQAVSRARKIERFFSQPFHVAEVFTGSPGKYVSLKDTIRGFKAIVDGEYDHLPEQAFYMVGSIEEAVEKAKKMAEKA.

Residue 148–155 (GGAGVGKT) participates in ATP binding.

This sequence belongs to the ATPase alpha/beta chains family. F-type ATPases have 2 components, CF(1) - the catalytic core - and CF(0) - the membrane proton channel. CF(1) has five subunits: alpha(3), beta(3), gamma(1), delta(1), epsilon(1). CF(0) has three main subunits: a(1), b(2) and c(9-12). The alpha and beta chains form an alternating ring which encloses part of the gamma chain. CF(1) is attached to CF(0) by a central stalk formed by the gamma and epsilon chains, while a peripheral stalk is formed by the delta and b chains.

The protein resides in the cell inner membrane. The enzyme catalyses ATP + H2O + 4 H(+)(in) = ADP + phosphate + 5 H(+)(out). Produces ATP from ADP in the presence of a proton gradient across the membrane. The catalytic sites are hosted primarily by the beta subunits. The sequence is that of ATP synthase subunit beta from Stenotrophomonas maltophilia (strain R551-3).